The following is a 338-amino-acid chain: Lumican (338 aa).

Positions 1 to 18 are cleaved as a signal peptide; that stretch reads MNVCAFSLALALVGSVSG. Position 19 is a pyrrolidone carboxylic acid (Gln19). A sulfotyrosine mark is found at Tyr20, Tyr21, Tyr23, and Tyr30. The 39-residue stretch at 28-66 folds into the LRRNT domain; it reads FMYGQISPNCAPECNCPHSYPTAMYCDDLKLKSVPMVPP. 8 LRR repeats span residues 67 to 88, 91 to 114, 117 to 137, 138 to 159, 160 to 181, 185 to 205, 206 to 227, and 230 to 250; these read GIKY…AFEN, DLQW…VFSK, QLKK…PLPK, SLQD…DGLV, NLTF…ASLK, SLEY…GLPT, SLLT…YFKR, and GLQY…PGNS. N-linked (GlcNAc...) (keratan sulfate) asparagine glycosylation is present at Asn88. N-linked (GlcNAc...) (keratan sulfate) asparagine glycosylation is present at Asn127. An N-linked (GlcNAc...) (keratan sulfate) asparagine glycan is attached at Asn160. N-linked (GlcNAc...) (keratan sulfate) asparagine glycosylation occurs at Asn252. LRR repeat units follow at residues 255-276 and 277-296; these read SLLE…NENL and ENYY…SFCK. A disulfide bond links Cys295 and Cys328. A Phosphoserine modification is found at Ser304. The LRR 11 repeat unit spans residues 305-326; sequence KIKHLRLDGNPLTQSSLPPDMY.

It belongs to the small leucine-rich proteoglycan (SLRP) family. SLRP class II subfamily. As to quaternary structure, binds to laminin. Contains keratan sulfate. In terms of processing, cys-37, Cys-41, Cys-43 and Cys-53 are involved in disulfide bonds. Cornea and other tissues.

The protein localises to the secreted. It localises to the extracellular space. Its subcellular location is the extracellular matrix. This Mus musculus (Mouse) protein is Lumican (Lum).